The following is an 85-amino-acid chain: Small ribosomal subunit protein uS17 (85 aa).

It belongs to the universal ribosomal protein uS17 family. In terms of assembly, part of the 30S ribosomal subunit.

Its function is as follows. One of the primary rRNA binding proteins, it binds specifically to the 5'-end of 16S ribosomal RNA. The protein is Small ribosomal subunit protein uS17 of Lachnospira eligens (strain ATCC 27750 / DSM 3376 / VPI C15-48 / C15-B4) (Eubacterium eligens).